The following is a 1144-amino-acid chain: Adenylate cyclase type 3 (1144 aa).

Over 1–79 the chain is Cytoplasmic; that stretch reads MTEDQGFSDP…FKRQRHETLL (79 aa). Transmembrane regions (helical) follow at residues 80–100, 105–125, 139–159, 173–193, and 226–246; these read VLVVFAALFDCYVVVMCAVVF, LAPLMVAGVGLVLDIILFVLC, VPYLLWLLITAQIFSYLGLNF, AFFVFSFFITLPLSLSPIVII, and ILANVFLYLCAIIVGIMSYYM. Mg(2+) is bound by residues aspartate 324, isoleucine 325, and aspartate 368. ATP-binding positions include 324–329 and 366–368; these read DIVGFT and LGD. The chain crosses the membrane as a helical span at residues 381-401; it reads EDHAVCSILMGLAMVEAISYV. The Cytoplasmic portion of the chain corresponds to 402–630; it reads REKTKTGVDM…RYSVEKEKQS (229 aa). ATP is bound at residue arginine 412. Lysine 465 is covalently cross-linked (Glycyl lysine isopeptide (Lys-Gly) (interchain with G-Cter in SUMO3)). The segment at 504–563 is disordered; that stretch reads QNGLNGSALPNGAPASKPSSPALIETKEPNGSAHASGSTSEEAEEQEAQADNPSFPNPRR. Serine 523 carries the phosphoserine modification. The segment covering 534–543 has biased composition (low complexity); it reads GSAHASGSTS. Phosphoserine is present on serine 578. A run of 3 helical transmembrane segments spans residues 631-651, 662-682, and 706-726; these read GAAFSCSCVVLFCTAMVEILI, FVVGEVLLLILTICSMAAIFP, and WAMLAIFILVMANVVDMLSCL. N-linked (GlcNAc...) asparagine glycosylation is present at asparagine 734. The next 3 helical transmembrane spans lie at 755–775, 777–797, and 833–853; these read VAVLSLIATIMLVQVSHMVKL, LMLLVTGAVTAINLYAWCPVF, and LPLVPSKYSMTVMMFVMMLSF. The Cytoplasmic portion of the chain corresponds to 854-1144; sequence YYFSRHVEKL…TLPHQVVDNP (291 aa). ATP is bound by residues lysine 975, 1062–1064, and 1069–1073; these read DIW and NVASR. At serine 1076 the chain carries Phosphoserine; by CaMK2. An ATP-binding site is contributed by lysine 1109.

The protein belongs to the adenylyl cyclase class-4/guanylyl cyclase family. It depends on Mg(2+) as a cofactor. Mn(2+) serves as cofactor. N-glycosylated. In terms of processing, sumoylated. Sumoylation is required for targeting ot olfactory cilia. Post-translationally, rapidly phosphorylated after stimulation by odorants or forskolin. Phosphorylation by CaMK2 at Ser-1076 down-regulates enzyme activity. Detected on cilia on the olfactory epithelium (at protein level). Detected on cilia on the olfactory epithelium.

Its subcellular location is the cell membrane. It is found in the golgi apparatus. The protein resides in the cell projection. The protein localises to the cilium. It localises to the cytoplasm. The enzyme catalyses ATP = 3',5'-cyclic AMP + diphosphate. Specifically activated by the G alpha protein GNAL/G(olf) in signaling cascades triggered by odorant receptors. Activated by forskolin. After forskolin treatment, activity is further increased by calcium/calmodulin. In the absence of forskolin, calcium/calmodulin has little effect on enzyme activity. Its function is as follows. Catalyzes the formation of the signaling molecule cAMP in response to G-protein signaling. Participates in signaling cascades triggered by odorant receptors via its function in cAMP biosynthesis: specifically activated by G alpha protein GNAL/G(olf) in olfactory epithelium. Required for the perception of odorants. Required for normal sperm motility and normal male fertility. Plays a role in regulating insulin levels and body fat accumulation in response to a high fat diet. The protein is Adenylate cyclase type 3 of Rattus norvegicus (Rat).